The primary structure comprises 66 residues: Large ribosomal subunit protein bL28 (66 aa).

The segment at 1 to 26 is disordered; sequence MAKDAITGARTRFGNQRSHALNSSRR. The span at 13–25 shows a compositional bias: polar residues; that stretch reads FGNQRSHALNSSR.

This sequence belongs to the bacterial ribosomal protein bL28 family.

This chain is Large ribosomal subunit protein bL28, found in Leuconostoc citreum (strain KM20).